The primary structure comprises 811 residues: Transmembrane protease serine 6 (811 aa).

The Cytoplasmic segment spans residues 1–55 (MLLLFHSKRMPVAEAPQVAGGQGDGGDGEEAEPEGMFKACEDSKRKARGYLRLVP). Residues 56–76 (LFVLLALLVLASAGVLLWYFL) form a helical; Signal-anchor for type II membrane protein membrane-spanning segment. Over 77 to 811 (GYKAEVMVSQ…VISWIQQVVT (735 aa)) the chain is Extracellular. Residues 84-209 (VSQVYSGSLR…EGLVILEASV (126 aa)) form the SEA domain. N-linked (GlcNAc...) asparagine glycosylation is found at Asn-136, Asn-184, Asn-216, Asn-338, Asn-433, and Asn-453. CUB domains are found at residues 213–336 (AALN…QACE) and 335–452 (CEVN…YGLY). Cys-335 and Cys-366 are disulfide-bonded. 3 LDL-receptor class A domains span residues 457 to 489 (PCPG…ERNC), 490 to 526 (VCRA…EQCQ), and 530 to 567 (PCGT…EHCD). 10 cysteine pairs are disulfide-bonded: Cys-458–Cys-470, Cys-464–Cys-480, Cys-474–Cys-489, Cys-491–Cys-503, Cys-497–Cys-516, Cys-510–Cys-525, Cys-531–Cys-543, Cys-538–Cys-557, Cys-551–Cys-566, and Cys-602–Cys-618. Asn-518 is a glycosylation site (N-linked (GlcNAc...) asparagine). The 235-residue stretch at 577–811 (IVGGAVSSEG…VISWIQQVVT (235 aa)) folds into the Peptidase S1 domain. Catalysis depends on charge relay system residues His-617 and Asp-668. Cystine bridges form between Cys-702–Cys-768, Cys-733–Cys-747, and Cys-758–Cys-787. The active-site Charge relay system is Ser-762.

The protein belongs to the peptidase S1 family. As to quaternary structure, interacts with HJV. Post-translationally, the single-chain zymogen undergoes autoproteolytic processing. This results in TMPRSS6 shedding from the cell surface and conversion into an activated two-chains form which is released extracellularly. The process involves a trans-activation mechanism that requires TMPRSS6 oligomerization.

It localises to the cell membrane. In terms of biological role, membrane-bound serine protease. Through the cleavage of cell surface hemojuvelin (HJV), a regulator of the expression of the iron absorption-regulating hormone hepicidin/HAMP, plays a role in iron homeostasis. In Homo sapiens (Human), this protein is Transmembrane protease serine 6 (TMPRSS6).